Consider the following 311-residue polypeptide: Dermonecrotic toxin LlSicTox-alphaIII1i (311 aa).

A signal peptide spans 1–21 (MYAHLALILGCWTVVLQGAET). A propeptide spanning residues 22–26 (DVGER) is cleaved from the precursor. His38 is an active-site residue. Glu58 and Asp60 together coordinate Mg(2+). Catalysis depends on His73, which acts as the Nucleophile. Cys77 and Cys83 are disulfide-bonded. Residue Asp117 participates in Mg(2+) binding.

The protein belongs to the arthropod phospholipase D family. Class I subfamily. Requires Mg(2+) as cofactor. Expressed by the venom gland.

Its subcellular location is the secreted. It catalyses the reaction an N-(acyl)-sphingosylphosphocholine = an N-(acyl)-sphingosyl-1,3-cyclic phosphate + choline. The catalysed reaction is an N-(acyl)-sphingosylphosphoethanolamine = an N-(acyl)-sphingosyl-1,3-cyclic phosphate + ethanolamine. It carries out the reaction a 1-acyl-sn-glycero-3-phosphocholine = a 1-acyl-sn-glycero-2,3-cyclic phosphate + choline. The enzyme catalyses a 1-acyl-sn-glycero-3-phosphoethanolamine = a 1-acyl-sn-glycero-2,3-cyclic phosphate + ethanolamine. Its function is as follows. Dermonecrotic toxins cleave the phosphodiester linkage between the phosphate and headgroup of certain phospholipids (sphingolipid and lysolipid substrates), forming an alcohol (often choline) and a cyclic phosphate. This toxin acts on sphingomyelin (SM) with high activity. It also act on acyl- and alkyl-lysophosphatidylcholine (LPC), but not on sphingosylphosphorylcholine (SPC) and phosphatidylcholine (PC). It may also act on ceramide phosphoethanolamine (CPE), and lysophosphatidylethanolamine (LPE), but not on lysophosphatidylserine (LPS), and lysophosphatidylglycerol (LPG). It acts by transphosphatidylation, releasing exclusively cyclic phosphate products as second products. Induces complement-dependent hemolysis and dermonecrosis. Also induces increased vascular permeability, edema, inflammatory response, and platelet aggregation. This is Dermonecrotic toxin LlSicTox-alphaIII1i from Loxosceles laeta (South American recluse spider).